The sequence spans 284 residues: MLLLFKNGKLLVKIKWSSKEDEQEVSRKLGKPEALCEARWEALSMSLSRSECTMECVSTSSSSSSSSNTFSKTEDPLRFMSERKNCWLSVSVSSRSLLPGPAAFTPLAKGEAEKSIIELECCIMRLIRWKDVRLCKRQERFKIRLESGNIFWALEYRSQISLFKFKSGSRFGTLFVLIVMFTTVHRVQCIYISIYIYAHAMNRTGEGRKSKGKKTCMLIPGPGVAHTYIYVAGPGTASVRLIVLLLLLLCIVVAVNTSGSCTGTNTMLRCFTSFCYVSACGRTQ.

3 helical membrane-spanning segments follow: residues 174–194, 217–237, and 241–261; these read LFVL…YISI, MLIP…PGTA, and LIVL…SGSC.

The protein localises to the membrane. This is an uncharacterized protein from Saccharomyces cerevisiae (strain ATCC 204508 / S288c) (Baker's yeast).